The sequence spans 268 residues: tRNA pseudouridine synthase A (268 aa).

Asp52 functions as the Nucleophile in the catalytic mechanism. Tyr110 is a binding site for substrate.

This sequence belongs to the tRNA pseudouridine synthase TruA family. As to quaternary structure, homodimer.

It catalyses the reaction uridine(38/39/40) in tRNA = pseudouridine(38/39/40) in tRNA. In terms of biological role, formation of pseudouridine at positions 38, 39 and 40 in the anticodon stem and loop of transfer RNAs. In Prochlorococcus marinus (strain AS9601), this protein is tRNA pseudouridine synthase A.